The primary structure comprises 307 residues: Olfactory receptor 12D2 (307 aa).

Residues M1 to P23 are Extracellular-facing. N-linked (GlcNAc...) asparagine glycosylation is present at N3. A helical membrane pass occupies residues F24 to L44. Residues M45 to R52 lie on the Cytoplasmic side of the membrane. A helical transmembrane segment spans residues L53–T73. Topologically, residues V74–S97 are extracellular. C95 and C187 form a disulfide bridge. Residues Q98–F118 traverse the membrane as a helical segment. Residues D119 to Q137 lie on the Cytoplasmic side of the membrane. Residues L138 to S158 traverse the membrane as a helical segment. The Extracellular portion of the chain corresponds to V159–W195. A helical transmembrane segment spans residues L196–S215. The Cytoplasmic portion of the chain corresponds to Y216–A236. Residues L237 to T257 traverse the membrane as a helical segment. The Extracellular segment spans residues Y258–D270. A helical membrane pass occupies residues R271 to L291. Residues R292 to L307 lie on the Cytoplasmic side of the membrane.

The protein belongs to the G-protein coupled receptor 1 family.

The protein resides in the cell membrane. Its function is as follows. Odorant receptor. The chain is Olfactory receptor 12D2 (OR12D2) from Homo sapiens (Human).